Here is a 540-residue protein sequence, read N- to C-terminus: Chaperonin GroEL (540 aa).

ATP-binding positions include 29–32, 86–90, Gly413, 476–478, and Asp492; these read TLGP, DGTTT, and NAA.

It belongs to the chaperonin (HSP60) family. In terms of assembly, forms a cylinder of 14 subunits composed of two heptameric rings stacked back-to-back. Interacts with the co-chaperonin GroES.

It is found in the cytoplasm. The catalysed reaction is ATP + H2O + a folded polypeptide = ADP + phosphate + an unfolded polypeptide.. Together with its co-chaperonin GroES, plays an essential role in assisting protein folding. The GroEL-GroES system forms a nano-cage that allows encapsulation of the non-native substrate proteins and provides a physical environment optimized to promote and accelerate protein folding. The sequence is that of Chaperonin GroEL from Streptococcus sanguinis.